Here is a 57-residue protein sequence, read N- to C-terminus: Large ribosomal subunit protein bL33 (57 aa).

The protein belongs to the bacterial ribosomal protein bL33 family.

This is Large ribosomal subunit protein bL33 from Shewanella sp. (strain MR-4).